We begin with the raw amino-acid sequence, 379 residues long: Cobalt-precorrin-5B C(1)-methyltransferase (379 aa).

This sequence belongs to the CbiD family.

The enzyme catalyses Co-precorrin-5B + S-adenosyl-L-methionine = Co-precorrin-6A + S-adenosyl-L-homocysteine. It participates in cofactor biosynthesis; adenosylcobalamin biosynthesis; cob(II)yrinate a,c-diamide from sirohydrochlorin (anaerobic route): step 6/10. Its function is as follows. Catalyzes the methylation of C-1 in cobalt-precorrin-5B to form cobalt-precorrin-6A. The sequence is that of Cobalt-precorrin-5B C(1)-methyltransferase from Salmonella paratyphi A (strain ATCC 9150 / SARB42).